Reading from the N-terminus, the 331-residue chain is Ketol-acid reductoisomerase (NADP(+)) (331 aa).

Positions 2–182 (AKMYYDKDAD…GGTRAGVIET (181 aa)) constitute a KARI N-terminal Rossmann domain. NADP(+) is bound by residues 25–28 (FGSQ), Ser51, Ser53, and 83–86 (DEKQ). His108 is an active-site residue. Gly134 serves as a coordination point for NADP(+). The KARI C-terminal knotted domain maps to 183–328 (TFKEETETDL…KGLREMMAWI (146 aa)). 4 residues coordinate Mg(2+): Asp191, Glu195, Glu227, and Glu231. Residue Ser252 coordinates substrate.

This sequence belongs to the ketol-acid reductoisomerase family. Mg(2+) serves as cofactor.

It carries out the reaction (2R)-2,3-dihydroxy-3-methylbutanoate + NADP(+) = (2S)-2-acetolactate + NADPH + H(+). It catalyses the reaction (2R,3R)-2,3-dihydroxy-3-methylpentanoate + NADP(+) = (S)-2-ethyl-2-hydroxy-3-oxobutanoate + NADPH + H(+). Its pathway is amino-acid biosynthesis; L-isoleucine biosynthesis; L-isoleucine from 2-oxobutanoate: step 2/4. It participates in amino-acid biosynthesis; L-valine biosynthesis; L-valine from pyruvate: step 2/4. Involved in the biosynthesis of branched-chain amino acids (BCAA). Catalyzes an alkyl-migration followed by a ketol-acid reduction of (S)-2-acetolactate (S2AL) to yield (R)-2,3-dihydroxy-isovalerate. In the isomerase reaction, S2AL is rearranged via a Mg-dependent methyl migration to produce 3-hydroxy-3-methyl-2-ketobutyrate (HMKB). In the reductase reaction, this 2-ketoacid undergoes a metal-dependent reduction by NADPH to yield (R)-2,3-dihydroxy-isovalerate. The chain is Ketol-acid reductoisomerase (NADP(+)) from Thermoanaerobacter pseudethanolicus (strain ATCC 33223 / 39E) (Clostridium thermohydrosulfuricum).